The chain runs to 361 residues: Phospho-N-acetylmuramoyl-pentapeptide-transferase (361 aa).

10 consecutive transmembrane segments (helical) span residues 28–48 (LAALTALSISFLIGPAMIRSL), 73–93 (TMGGALILMAVIITTLLWADL), 97–117 (YIWLVLLTTLGFGAIGWVDDY), 134–154 (FFWQSIIALLVAVYLAMTAEL), 168–188 (VAIPLGSFLFIILTYLVIVGS), 200–220 (GLAIMPTVMISGALAIFAYVA), 237–257 (AGELAVFCGALAGAGLAFLWF), 264–284 (VFMGDVGALALGAALGVITVI), 289–309 (IVLVIMGGVFVMEALSVMIQV), and 338–358 (QVVVRFWIITIILVLIGLSTL).

It belongs to the glycosyltransferase 4 family. MraY subfamily. Mg(2+) serves as cofactor.

The protein localises to the cell inner membrane. It catalyses the reaction UDP-N-acetyl-alpha-D-muramoyl-L-alanyl-gamma-D-glutamyl-meso-2,6-diaminopimeloyl-D-alanyl-D-alanine + di-trans,octa-cis-undecaprenyl phosphate = di-trans,octa-cis-undecaprenyl diphospho-N-acetyl-alpha-D-muramoyl-L-alanyl-D-glutamyl-meso-2,6-diaminopimeloyl-D-alanyl-D-alanine + UMP. It functions in the pathway cell wall biogenesis; peptidoglycan biosynthesis. Functionally, catalyzes the initial step of the lipid cycle reactions in the biosynthesis of the cell wall peptidoglycan: transfers peptidoglycan precursor phospho-MurNAc-pentapeptide from UDP-MurNAc-pentapeptide onto the lipid carrier undecaprenyl phosphate, yielding undecaprenyl-pyrophosphoryl-MurNAc-pentapeptide, known as lipid I. This chain is Phospho-N-acetylmuramoyl-pentapeptide-transferase, found in Nitrosomonas eutropha (strain DSM 101675 / C91 / Nm57).